We begin with the raw amino-acid sequence, 159 residues long: uncharacterized protein (159 aa).

The protein resides in the mitochondrion. This is an uncharacterized protein from Arabidopsis thaliana (Mouse-ear cress).